Reading from the N-terminus, the 198-residue chain is DnaJ homolog subfamily C member 12 (198 aa).

Met1 bears the N-acetylmethionine mark. The region spanning 14-79 (DYYTLLGCDE…ASRARYDHWR (66 aa)) is the J domain. The disordered stretch occupies residues 112–167 (MLEESDQTPTDKIENEEQDEQKEIKKEEFGSTTEKMEQKESKSVEKSFSPQNPDSP). A compositionally biased stretch (basic and acidic residues) spans 120 to 156 (PTDKIENEEQDEQKEIKKEEFGSTTEKMEQKESKSVE). Phosphoserine occurs at positions 160, 166, and 182.

As to quaternary structure, interacts with HSPA8. Interacts with TPH1. Interacts with TPH2.

The protein resides in the cytoplasm. Probable co-chaperone that participates in the proper folding of biopterin-dependent aromatic amino acid hydroxylases, which include phenylalanine-4-hydroxylase (PAH), tyrosine 3-monooxygenase (TH) and peripheral and neuronal tryptophan hydroxylases (TPH1 and TPH2). This chain is DnaJ homolog subfamily C member 12 (DNAJC12), found in Bos taurus (Bovine).